The primary structure comprises 261 residues: MAVQAVHIQGDAFLVCVTHSLSTEREEVMGLCIGEVDTQKLVHIHSVIILRRSDKRKDRVEISPEQLSAATIEADRLADITGRPMRVVGWYHSHPHITVWPSHVDVRTQAMYQMMDVGFVGLIFSCFIEDKNTKTGRILYTCFQSVQAQKSSEYERIEVPLHVVPHNTIRKVCLESAVELPRILCQEEQDAYRRIHSLGHLDSITKIHNGSVFTKNLCGQMSAISGPLLQWLEDRLEQNRQRAQELQSEKEQLLQELKTLG.

The MPN domain occupies 6-149; sequence VHIQGDAFLV…YTCFQSVQAQ (144 aa). Positions 92, 94, and 105 each coordinate Zn(2+). The JAMM motif signature appears at 92 to 105; it reads HSHPHITVWPSHVD.

The protein belongs to the peptidase M67A family. BRCC36 subfamily. Component of the BRCA1-A complex, at least composed of brca1, bard1, uimc1/rap80, abraxas1, brcc3/brcc36, babam2 and babam1/nba1. In the BRCA1-A complex, interacts directly with ABRAXAS1 and babam2. Component of the BRISC complex, at least composed of ABRAXAS2, brcc3/brcc36, babam2 and babam1/nba1. Within the complex, interacts directly with abraxas2. Both the BRCA1-A complex and the BRISC complex bind polyubiquitin. Requires Zn(2+) as cofactor.

The protein resides in the nucleus. Its subcellular location is the cytoplasm. The protein localises to the cytoskeleton. It is found in the spindle pole. Metalloprotease that specifically cleaves 'Lys-63'-linked polyubiquitin chains. Does not have activity toward 'Lys-48'-linked polyubiquitin chains. Component of the BRCA1-A complex, a complex that specifically recognizes 'Lys-63'-linked ubiquitinated histones H2A and H2AX at DNA lesions sites, leading to target the brca1-bard1 heterodimer to sites of DNA damage at double-strand breaks (DSBs). In the BRCA1-A complex, it specifically removes 'Lys-63'-linked ubiquitin on histones H2A and H2AX, antagonizing the rnf8-dependent ubiquitination at double-strand breaks (DSBs). Catalytic subunit of the BRISC complex, a multiprotein complex that specifically cleaves 'Lys-63'-linked ubiquitin in various substrates. Mediates the specific 'Lys-63'-specific deubiquitination associated with the COP9 signalosome complex (CSN), via the interaction of the BRISC complex with the CSN complex. The BRISC complex is required for normal mitotic spindle assembly and microtubule attachment to kinetochores via its role in deubiquitinating numa1. Plays a role in interferon signaling via its role in the deubiquitination of the interferon receptor ifnar1; deubiquitination increases ifnar1 activity by enhancing its stability and cell surface expression. Acts as a regulator of the NLRP3 inflammasome by mediating deubiquitination of nlrp3. Down-regulates the response to bacterial lipopolysaccharide (LPS) via its role in ifnar1 deubiquitination. The sequence is that of Lys-63-specific deubiquitinase BRCC36 (brcc3) from Xenopus laevis (African clawed frog).